The chain runs to 369 residues: Peptide chain release factor 2 (369 aa).

The residue at position 251 (glutamine 251) is an N5-methylglutamine.

It belongs to the prokaryotic/mitochondrial release factor family. Methylated by PrmC. Methylation increases the termination efficiency of RF2.

It localises to the cytoplasm. Functionally, peptide chain release factor 2 directs the termination of translation in response to the peptide chain termination codons UGA and UAA. This Chlamydia muridarum (strain MoPn / Nigg) protein is Peptide chain release factor 2 (prfB).